Reading from the N-terminus, the 129-residue chain is UPF0325 protein YPTS_3127 (129 aa).

It belongs to the UPF0325 family.

In Yersinia pseudotuberculosis serotype IB (strain PB1/+), this protein is UPF0325 protein YPTS_3127.